The primary structure comprises 418 residues: Serpin A3-8 (418 aa).

Residues 1 to 25 form the signal peptide; the sequence is MRAERMSPLLALGLLVSGLCSRVHC. 4 N-linked (GlcNAc...) asparagine glycosylation sites follow: Asn103, Asn183, Asn233, and Asn268.

It belongs to the serpin family. In terms of assembly, homodimer.

It localises to the cytoplasmic vesicle. It is found in the secretory vesicle. The protein resides in the chromaffin granule. The protein localises to the secreted. Serine protease inhibitor. This Bos taurus (Bovine) protein is Serpin A3-8.